The primary structure comprises 273 residues: Urease accessory protein UreD (273 aa).

The protein belongs to the UreD family. As to quaternary structure, ureD, UreF and UreG form a complex that acts as a GTP-hydrolysis-dependent molecular chaperone, activating the urease apoprotein by helping to assemble the nickel containing metallocenter of UreC. The UreE protein probably delivers the nickel.

Its subcellular location is the cytoplasm. Its function is as follows. Required for maturation of urease via the functional incorporation of the urease nickel metallocenter. This Bacillus cereus (strain ATCC 10987 / NRS 248) protein is Urease accessory protein UreD.